Consider the following 429-residue polypeptide: Adenylosuccinate synthetase (429 aa).

GTP contacts are provided by residues 12–18 (GDEGKGK) and 40–42 (GHT). Residue Asp13 is the Proton acceptor of the active site. Asp13 and Gly40 together coordinate Mg(2+). Residues 13 to 16 (DEGK), 38 to 41 (NAGH), Thr128, Arg142, Gln223, Thr238, and Arg302 contribute to the IMP site. His41 functions as the Proton donor in the catalytic mechanism. 298–304 (TVTGRPR) is a binding site for substrate. GTP contacts are provided by residues Arg304, 330 to 332 (LLD), and 412 to 414 (SVG).

It belongs to the adenylosuccinate synthetase family. As to quaternary structure, homodimer. Mg(2+) is required as a cofactor.

The protein resides in the cytoplasm. It carries out the reaction IMP + L-aspartate + GTP = N(6)-(1,2-dicarboxyethyl)-AMP + GDP + phosphate + 2 H(+). Its pathway is purine metabolism; AMP biosynthesis via de novo pathway; AMP from IMP: step 1/2. Its function is as follows. Plays an important role in the de novo pathway of purine nucleotide biosynthesis. Catalyzes the first committed step in the biosynthesis of AMP from IMP. The protein is Adenylosuccinate synthetase of Limosilactobacillus fermentum (strain NBRC 3956 / LMG 18251) (Lactobacillus fermentum).